The chain runs to 322 residues: Daunorubicin resistance ATP-binding protein DrrA2 (322 aa).

The 231-residue stretch at 6 to 236 folds into the ABC transporter domain; sequence VRAEAMEKRY…VGGDRIEVVV (231 aa). 38–45 is an ATP binding site; the sequence is GPNGAGKT.

This sequence belongs to the ABC transporter superfamily. Drug exporter-1 (DrugE1) (TC 3.A.1.105) family. In terms of assembly, the complex is probably composed of two ATP-binding proteins (DrrA2) and two transmembrane proteins (DrrB2).

It localises to the cell membrane. It catalyses the reaction daunorubicin(in) + ATP + H2O = daunorubicin(out) + ADP + phosphate + H(+). Its function is as follows. Part of the ABC transporter complex DrrA2B2 involved in daunorubicin efflux. Responsible for energy coupling to the transport system. Confers self-resistance to daunorubicin, an antibiotic produced by S.coeruleorubidus. In Streptomyces coeruleorubidus, this protein is Daunorubicin resistance ATP-binding protein DrrA2.